We begin with the raw amino-acid sequence, 306 residues long: Pantothenate kinase (306 aa).

91-98 lines the ATP pocket; it reads GSVAVGKS.

The protein belongs to the prokaryotic pantothenate kinase family.

It localises to the cytoplasm. It carries out the reaction (R)-pantothenate + ATP = (R)-4'-phosphopantothenate + ADP + H(+). It functions in the pathway cofactor biosynthesis; coenzyme A biosynthesis; CoA from (R)-pantothenate: step 1/5. In Streptococcus pyogenes serotype M12 (strain MGAS2096), this protein is Pantothenate kinase.